A 134-amino-acid chain; its full sequence is ATP synthase epsilon chain (134 aa).

This sequence belongs to the ATPase epsilon chain family. As to quaternary structure, F-type ATPases have 2 components, CF(1) - the catalytic core - and CF(0) - the membrane proton channel. CF(1) has five subunits: alpha(3), beta(3), gamma(1), delta(1), epsilon(1). CF(0) has three main subunits: a, b and c.

The protein localises to the cell membrane. Its function is as follows. Produces ATP from ADP in the presence of a proton gradient across the membrane. The polypeptide is ATP synthase epsilon chain (Anoxybacillus flavithermus (strain DSM 21510 / WK1)).